Here is a 445-residue protein sequence, read N- to C-terminus: Ribosomal protein uS12 methylthiotransferase RimO (445 aa).

The 116-residue stretch at 4-119 (IKVALVSLGC…LLESIKVFLK (116 aa)) folds into the MTTase N-terminal domain. Residues Cys-13, Cys-48, Cys-82, Cys-156, Cys-160, and Cys-163 each coordinate [4Fe-4S] cluster. Positions 142 to 372 (TTPTYTAYVR…MILQQSISKD (231 aa)) constitute a Radical SAM core domain. In terms of domain architecture, TRAM spans 375–441 (KEKIGKIYEV…EYDLIGVVYN (67 aa)).

The protein belongs to the methylthiotransferase family. RimO subfamily. [4Fe-4S] cluster is required as a cofactor.

It localises to the cytoplasm. The enzyme catalyses L-aspartate(89)-[ribosomal protein uS12]-hydrogen + (sulfur carrier)-SH + AH2 + 2 S-adenosyl-L-methionine = 3-methylsulfanyl-L-aspartate(89)-[ribosomal protein uS12]-hydrogen + (sulfur carrier)-H + 5'-deoxyadenosine + L-methionine + A + S-adenosyl-L-homocysteine + 2 H(+). Its function is as follows. Catalyzes the methylthiolation of an aspartic acid residue of ribosomal protein uS12. The chain is Ribosomal protein uS12 methylthiotransferase RimO from Clostridium botulinum (strain Okra / Type B1).